Reading from the N-terminus, the 85-residue chain is Large ribosomal subunit protein bL27 (85 aa).

Residues 1-20 form a disordered region; that stretch reads MAHKKAAGSTRNGRDSEAKR.

This sequence belongs to the bacterial ribosomal protein bL27 family.

The chain is Large ribosomal subunit protein bL27 from Colwellia psychrerythraea (strain 34H / ATCC BAA-681) (Vibrio psychroerythus).